The sequence spans 513 residues: ATP synthase subunit alpha (513 aa).

Position 169–176 (169–176) interacts with ATP; it reads GDRQVGKT.

Belongs to the ATPase alpha/beta chains family. In terms of assembly, F-type ATPases have 2 components, CF(1) - the catalytic core - and CF(0) - the membrane proton channel. CF(1) has five subunits: alpha(3), beta(3), gamma(1), delta(1), epsilon(1). CF(0) has three main subunits: a(1), b(2) and c(9-12). The alpha and beta chains form an alternating ring which encloses part of the gamma chain. CF(1) is attached to CF(0) by a central stalk formed by the gamma and epsilon chains, while a peripheral stalk is formed by the delta and b chains.

The protein localises to the cell inner membrane. The catalysed reaction is ATP + H2O + 4 H(+)(in) = ADP + phosphate + 5 H(+)(out). In terms of biological role, produces ATP from ADP in the presence of a proton gradient across the membrane. The alpha chain is a regulatory subunit. This is ATP synthase subunit alpha from Aeromonas hydrophila subsp. hydrophila (strain ATCC 7966 / DSM 30187 / BCRC 13018 / CCUG 14551 / JCM 1027 / KCTC 2358 / NCIMB 9240 / NCTC 8049).